The chain runs to 179 residues: Putative BPIFA4P protein (179 aa).

An N-terminal signal peptide occupies residues 1–20; it reads MLNVSGLFVLLCGLLVSSSA.

Belongs to the BPI/LBP/Plunc superfamily. Plunc family. In terms of tissue distribution, expressed in breast cancer and salivary gland.

It localises to the secreted. Its function is as follows. Major protein in sweat, has surfactant properties. The polypeptide is Putative BPIFA4P protein (BPIFA4P) (Homo sapiens (Human)).